A 415-amino-acid polypeptide reads, in one-letter code: Actin-like protein 9 (415 aa).

The tract at residues 1–22 is disordered; sequence MDVNGHPKFQPSPETDGPLPLT.

It belongs to the actin family. Interacts with ACTL7A.

It localises to the cytoplasmic vesicle. Its subcellular location is the secretory vesicle. The protein resides in the acrosome. The protein localises to the cytoplasm. It is found in the cytoskeleton. It localises to the perinuclear theca. Its function is as follows. Testis-specic protein that plays an important role in fusion of proacrosomal vesicles and perinuclear theca formation. This Mus musculus (Mouse) protein is Actin-like protein 9 (Actl9).